A 1259-amino-acid polypeptide reads, in one-letter code: Translocation and assembly module subunit TamB (1259 aa).

N-formylmethionine is present on methionine 1. Topologically, residues 1-6 are cytoplasmic; it reads MSLWKK. Residues 7–27 form a helical; Signal-anchor for type II membrane protein membrane-spanning segment; the sequence is ISLGVVIVILLLLGSVAFLVG. Residues 28-1259 lie on the Periplasmic side of the membrane; that stretch reads TTSGLHLVFK…ALDLLYQFEF (1232 aa).

It belongs to the TamB family. As to quaternary structure, interacts with TamA to form the translocation and assembly module (TAM).

The protein localises to the cell inner membrane. Component of the translocation and assembly module (TAM), which facilitates the insertion and assembly of specific beta-barrel proteins into the outer membrane. Promotes the assembly and secretion across the outer membrane of a subset of autotransporters, such as Ag43. Involved in the assembly of the outer membrane usher protein FimD. In vitro, when TAM is reconstituted into preformed liposomes, it can promote the assembly of several outer membrane proteins, including OmpA, EspP, Ag43 and FadL. TamA is sufficient to catalyze a low level of outer membrane protein (OMP) assembly, but both TamA and TamB are required for efficient OMP assembly. TamB may regulate TamA activity. It could regulate conformational changes in TamA to drive its function in OMP assembly. It could also act as a chaperone that facilitate the transport of nascent membrane proteins across the periplasm to TamA in the outer membrane. Its function is as follows. In addition, is involved in outer membrane lipid homeostasis. Likely transports phospholipids between the inner membrane and the outer membrane. It would provide a bridge-like structure that protects phospholipids as they travel across the periplasm. One possible explanation for the apparent dual function of TAM is that TamB is a somewhat generic transporter of hydrophobic molecules. Functionally, tamB, YdbH and YhdP are redundant, but not equivalent, in performing an essential function for growth and maintaining lipid homeostasis in the outer membrane. The transport functions of TamB and YhdP could be differentiated according to the fatty acid saturation state of the phospholipids, with TamB transporting more unsaturated phospholipids and YhdP more saturated phospholipids. Any of these three proteins is sufficient for growth. The protein is Translocation and assembly module subunit TamB of Escherichia coli (strain K12).